The primary structure comprises 398 residues: MTKSLTNMNITNKKVLLRADLNVPLENSVITDDNRIKAILPTLKYLVQQKAKVIIFSHLGRVKTEADKAHFSLQVVAEKIAFYLQQKLKFVPETQGNTLNQAVGQMLPGDVLVVQNTRFEDVPFKKESKNDPELGKYWASLGDVFVNDAFGTCHRTHASNVGIATYIKEKCFGFLVEKEISFLKKIVQTPQRPLVAVLGGSKVSDKIGVIRSLLQKVDVLLIGGGMSYTCLKAKCFNIGTSLLEADKIPLVKELLASPEGKKIVLPKDFVCGKEFSPTTQAAVYSYDNISDDVMGLDIGPQTIELFKTYLQTAQTVVWNGPVGVFEFEQFSKGTKALAETISNLSPNTTTIIGGGDSAAAVFKFGLDQNFSHISTGGGAFLEFLEGKPMPGLACMEKL.

Substrate is bound by residues 20 to 22 (DLN), Arg-35, 58 to 61 (HLGR), Arg-118, and Arg-155. ATP-binding positions include Lys-206, Gly-295, Glu-326, and 354–357 (GGDS).

This sequence belongs to the phosphoglycerate kinase family. Monomer.

The protein resides in the cytoplasm. It catalyses the reaction (2R)-3-phosphoglycerate + ATP = (2R)-3-phospho-glyceroyl phosphate + ADP. The protein operates within carbohydrate degradation; glycolysis; pyruvate from D-glyceraldehyde 3-phosphate: step 2/5. In Onion yellows phytoplasma (strain OY-M), this protein is Phosphoglycerate kinase.